A 373-amino-acid chain; its full sequence is Spore germination protein A3 (373 aa).

Positions 1–17 (MKIRILCMFICTLLLSG) are cleaved as a signal peptide. Cys-18 is lipidated: N-palmitoyl cysteine. Residue Cys-18 is the site of S-diacylglycerol cysteine attachment.

This sequence belongs to the GerABKC lipoprotein family.

Its subcellular location is the cell membrane. Functionally, forms a complex at the inner spore membrane which acts as a receptor for L-alanine, thus is involved in the stimulation of germination in response to alanine. Can stimulate germination in the absence of GerD and GerK gene products (fructose and glucose receptors, respectively), but the response is improved in their presence. The chain is Spore germination protein A3 (gerAC) from Bacillus subtilis (strain 168).